Reading from the N-terminus, the 326-residue chain is Polycomb complex protein BMI-1-A (326 aa).

The RING-type zinc-finger motif lies at 18-57; the sequence is CVLCGGYFIDATTIIECLHSFCKTCIVRYLETSKYCPICD. Positions 81 to 95 match the Nuclear localization signal motif; sequence KLVPGLFKGEMKRRR. 2 disordered regions span residues 239-262 and 274-326; these read NPHT…DKAG and CIPS…ISSG. The segment covering 290–303 has biased composition (low complexity); it reads ISSTINGTSSSSSS.

In terms of assembly, component of a PRC1-like complex. Interacts with cbx4.

Its subcellular location is the nucleus. Component of a Polycomb group (PcG) multiprotein PRC1-like complex, a complex class required to maintain the transcriptionally repressive state of many genes, including Hox genes, throughout development. PcG PRC1 complex acts via chromatin remodeling and modification of histones; it mediates monoubiquitination of histone H2A 'Lys-119', rendering chromatin heritably changed in its expressibility. In the PRC1 complex, it is required to stimulate the E3 ubiquitin-protein ligase activity of rnf2. The chain is Polycomb complex protein BMI-1-A (bmi1a) from Xenopus laevis (African clawed frog).